The primary structure comprises 337 residues: Putative long-chain-alcohol O-fatty-acyltransferase 10 (337 aa).

8 consecutive transmembrane segments (helical) span residues 7 to 27 (SFVK…YIPS), 38 to 58 (SVLP…FTIF), 59 to 79 (SSTT…LFAF), 82 to 102 (GPLL…CLPI), 142 to 162 (ILLL…LLTI), 228 to 248 (MGCM…YFYI), 254 to 274 (TLEV…EIAV), and 285 to 305 (MLLR…LFFG).

It belongs to the wax synthase family.

Its subcellular location is the membrane. The catalysed reaction is a long chain fatty alcohol + a fatty acyl-CoA = a wax ester + CoA. Catalyzes the final step in the synthesis of long-chain linear esters (waxes). This Arabidopsis thaliana (Mouse-ear cress) protein is Putative long-chain-alcohol O-fatty-acyltransferase 10.